Here is a 130-residue protein sequence, read N- to C-terminus: Small ribosomal subunit protein uS11 (130 aa).

The disordered stretch occupies residues 109 to 130 (EDVTPIPHDGTGRPGGKRGRRV).

The protein belongs to the universal ribosomal protein uS11 family. Part of the 30S ribosomal subunit.

Located on the platform of the 30S subunit. The sequence is that of Small ribosomal subunit protein uS11 from Methanosphaera stadtmanae (strain ATCC 43021 / DSM 3091 / JCM 11832 / MCB-3).